Reading from the N-terminus, the 353-residue chain is Outer membrane protein P5 (353 aa).

The signal sequence occupies residues 1 to 21 (MKKTAIALVVAGLAAASVAQA). 8 beta stranded membrane passes run 27-37 (TFYAGVKAGQA), 58-69 (SFTYGVFGGYQI), 77-85 (LAVELGYDD), 104-115 (HGAHLSLKGSYE), 120-128 (LDVYGKAGV), 158-167 (GLFAVGAEYA), 172-179 (LAVRLEYQ), and 205-213 (SINAGISYR). Residues 227–353 (VVSKTFSLNS…RVEIAVNGTK (127 aa)) enclose the OmpA-like domain. Cys326 and Cys338 are joined by a disulfide.

Belongs to the outer membrane OOP (TC 1.B.6) superfamily. OmpA family. As to quaternary structure, monomer and homodimer.

Its subcellular location is the cell outer membrane. With TolR probably plays a role in maintaining the position of the peptidoglycan cell wall in the periplasm. Acts as a porin with low permeability that allows slow penetration of small solutes; an internal gate slows down solute passage. The chain is Outer membrane protein P5 from Haemophilus influenzae.